The chain runs to 280 residues: Borealin (280 aa).

Residues 140 to 153 show a composition bias toward basic residues; that stretch reads KVAAKKPSTARRTR. The tract at residues 140-187 is disordered; sequence KVAAKKPSTARRTRASVGNVANTSKRTSKRGRATPSASKQAETSLLGY.

The protein belongs to the borealin family. As to quaternary structure, component of the CPC at least composed of survivin/birc5, incenp, cdca8/borealin and/or cdca9/dasra-A, and aurkb/aurora-B. Interacts with incenp (via N-terminus).

It is found in the nucleus. It localises to the chromosome. The protein resides in the centromere. The protein localises to the cytoplasm. Its subcellular location is the cytoskeleton. It is found in the spindle. In terms of biological role, component of the chromosomal passenger complex (CPC), a complex that acts as a key regulator of mitosis. The CPC complex has essential functions at the centromere in ensuring correct chromosome alignment and segregation and is required for chromatin-induced microtubule stabilization and spindle assembly. Contributes to CPC function by facilitating loading of the CPC onto chromosomes. In Xenopus laevis (African clawed frog), this protein is Borealin (cdca8).